Consider the following 276-residue polypeptide: NAD-capped RNA hydrolase NudC (276 aa).

Substrate is bound at residue arginine 82. 2 residues coordinate Zn(2+): cysteine 112 and cysteine 115. Glutamate 125 is a substrate binding site. The Zn(2+) site is built by cysteine 130 and cysteine 133. A substrate-binding site is contributed by tyrosine 138. One can recognise a Nudix hydrolase domain in the interval 139-262 (PRLSPSMIVL…SIARYLIELY (124 aa)). 3 residues coordinate a divalent metal cation: alanine 172, glutamate 188, and glutamate 192. Positions 173-194 (GYVEPGESVEQCVAREVREEVG) match the Nudix box motif. 206-213 (QGWPFPHS) is a binding site for substrate. Residue glutamate 233 participates in a divalent metal cation binding. Residue alanine 255 participates in substrate binding.

This sequence belongs to the Nudix hydrolase family. NudC subfamily. As to quaternary structure, homodimer. It depends on Mg(2+) as a cofactor. The cofactor is Mn(2+). Zn(2+) serves as cofactor.

The catalysed reaction is a 5'-end NAD(+)-phospho-ribonucleoside in mRNA + H2O = a 5'-end phospho-adenosine-phospho-ribonucleoside in mRNA + beta-nicotinamide D-ribonucleotide + 2 H(+). It carries out the reaction NAD(+) + H2O = beta-nicotinamide D-ribonucleotide + AMP + 2 H(+). The enzyme catalyses NADH + H2O = reduced beta-nicotinamide D-ribonucleotide + AMP + 2 H(+). Functionally, mRNA decapping enzyme that specifically removes the nicotinamide adenine dinucleotide (NAD) cap from a subset of mRNAs by hydrolyzing the diphosphate linkage to produce nicotinamide mononucleotide (NMN) and 5' monophosphate mRNA. The NAD-cap is present at the 5'-end of some mRNAs and stabilizes RNA against 5'-processing. Has preference for mRNAs with a 5'-end purine. Catalyzes the hydrolysis of a broad range of dinucleotide pyrophosphates. The sequence is that of NAD-capped RNA hydrolase NudC from Stutzerimonas stutzeri (strain A1501) (Pseudomonas stutzeri).